Reading from the N-terminus, the 142-residue chain is Coactosin-like protein (142 aa).

At alanine 2 the chain carries N-acetylalanine. An ADF-H domain is found at 2 to 130; it reads ATKIDKEACR…EEDFIKNELK (129 aa). Residues 66 to 75 are flexible and important for F-actin binding; it reads TGDAMSKRSK. N6-acetyllysine occurs at positions 102 and 126.

It belongs to the actin-binding proteins ADF family. Coactosin subfamily. Interacts with 5-lipoxygenase (ALOX5/5LO) in a calcium-independent manner. Binds to F-actin with a stoichiometry of 1:2.

It is found in the cytoplasm. Its subcellular location is the cytoskeleton. The protein resides in the nucleus. Binds to F-actin in a calcium-independent manner. Has no direct effect on actin depolymerization. Acts as a chaperone for ALOX5 (5LO), influencing both its stability and activity in leukotrienes synthesis. The polypeptide is Coactosin-like protein (COTL1) (Bos taurus (Bovine)).